Here is a 438-residue protein sequence, read N- to C-terminus: Coenzyme A disulfide reductase (438 aa).

8–33 (GAVAGGATCASQIRRLDKESDIIIFE) is a binding site for FAD. Threonine 15, glutamine 19, arginine 22, serine 39, and asparagine 42 together coordinate substrate. The active-site Nucleophile is the cysteine 43. Cysteine 43 serves as the catalytic Redox-active. Residue lysine 71 coordinates substrate. 151 to 166 (VLVVGAGYVSLEVLEN) contacts NADP(+). 267-277 (TNVPNIYVIGD) is a binding site for FAD. Histidine 299 contacts substrate. Residue tyrosine 419 participates in FAD binding. Residue lysine 427 coordinates substrate.

It belongs to the class-III pyridine nucleotide-disulfide oxidoreductase family. In terms of assembly, homodimer. Requires FAD as cofactor.

The catalysed reaction is NADP(+) + 2 CoA = CoA-disulfide + NADPH + H(+). In terms of biological role, catalyzes specifically the NADPH-dependent reduction of coenzyme A disulfide. This Staphylococcus aureus (strain MRSA252) protein is Coenzyme A disulfide reductase.